We begin with the raw amino-acid sequence, 801 residues long: Fibroblast growth factor receptor 3 (801 aa).

Residues 1–20 (MVVPACVLVFCVAVVAGATS) form the signal peptide. Residues 21–369 (EPPGPEQRVV…TDEAGSVYAG (349 aa)) lie on the Extracellular side of the membrane. The 103-residue stretch at 22–124 (PPGPEQRVVR…VLCHFSVRVT (103 aa)) folds into the Ig-like C2-type 1 domain. Cysteine 59 and cysteine 107 form a disulfide bridge. N-linked (GlcNAc...) asparagine glycosylation occurs at asparagine 96. A disordered region spans residues 125-146 (DAPSSGDDEDGEDVAEDTGAPY). Residues 130–140 (GDDEDGEDVAE) are compositionally biased toward acidic residues. Ig-like C2-type domains follow at residues 145–238 (PYWT…YTLD) and 247–349 (PILQ…AWLV). Residues cysteine 170 and cysteine 222 are joined by a disulfide bond. 5 N-linked (GlcNAc...) asparagine glycosylation sites follow: asparagine 219, asparagine 256, asparagine 288, asparagine 309, and asparagine 322. Cysteine 269 and cysteine 333 are oxidised to a cystine. A helical transmembrane segment spans residues 370–390 (VLSYGVVFFLFILVVAAVILC). The Cytoplasmic portion of the chain corresponds to 391-801 (RLRSPPKKGL…GPPSNGGPRT (411 aa)). A phosphoserine mark is found at serine 438 and serine 439. Positions 466–756 (LTLGKPLGEG…LTVTSTDEYL (291 aa)) constitute a Protein kinase domain. Residues 472 to 480 (LGEGCFGQV) and lysine 502 each bind ATP. Aspartate 611 functions as the Proton acceptor in the catalytic mechanism. 4 positions are modified to phosphotyrosine; by autocatalysis: tyrosine 641, tyrosine 642, tyrosine 719, and tyrosine 755. The interval 762 to 801 (FEQYSPGGQDTPSSSSSGDDSVFTHDLLPPGPPSNGGPRT) is disordered. Positions 766–782 (SPGGQDTPSSSSSGDDS) are enriched in low complexity. The span at 790–801 (PPGPPSNGGPRT) shows a compositional bias: pro residues.

The protein belongs to the protein kinase superfamily. Tyr protein kinase family. Fibroblast growth factor receptor subfamily. In terms of assembly, monomer. Homodimer after ligand binding. Interacts with FGF1, FGF2, FGF4, FGF6; FGF8, FGF9, FGF10, FGF17, FGF18, FGF19, FGF20 and FGF23 (in vitro). Interacts with KLB. Affinity for fibroblast growth factors (FGFs) is increased by heparan sulfate glycosaminoglycans that function as coreceptors. Likewise, KLB increases the affinity for FGF19 and FGF21. Interacts with PIK3R1, PLCG1, SOCS1 and SOCS3. Post-translationally, autophosphorylated. Binding of FGF family members together with heparan sulfate proteoglycan or heparin promotes receptor dimerization and autophosphorylation on tyrosine residues. Autophosphorylation occurs in trans between the two FGFR molecules present in the dimer. Phosphorylation at Tyr-719 is essential for stimulation of cell proliferation and activation of PIK3R1, STAT1 and MAP kinase signaling. Phosphorylation at Tyr-755 is required for interaction with PIK3R1 and PLCG1. In terms of processing, ubiquitinated. Is rapidly ubiquitinated after ligand binding and autophosphorylation, leading to receptor internalization and degradation. Subject to both proteasomal and lysosomal degradation. N-glycosylated in the endoplasmic reticulum. The N-glycan chains undergo further maturation to an Endo H-resistant form in the Golgi apparatus. In terms of tissue distribution, in embryo, expressed in heart, lung, kidney, skin, head and liver but not in muscle. In adult, highest levels in brain. Also expressed in liver, lung, kidney, testis, ovary and uterus. Very low levels in heart, thymus, spleen and muscle.

Its subcellular location is the cell membrane. The protein resides in the cytoplasmic vesicle. It localises to the endoplasmic reticulum. The enzyme catalyses L-tyrosyl-[protein] + ATP = O-phospho-L-tyrosyl-[protein] + ADP + H(+). Its activity is regulated as follows. Present in an inactive conformation in the absence of bound ligand. Ligand binding leads to dimerization and activation by autophosphorylation on tyrosine residues. Tyrosine-protein kinase that acts as a cell-surface receptor for fibroblast growth factors and plays an essential role in the regulation of cell proliferation, differentiation and apoptosis. Plays an essential role in the regulation of chondrocyte differentiation, proliferation and apoptosis, and is required for normal skeleton development. Regulates both osteogenesis and postnatal bone mineralization by osteoblasts. Promotes apoptosis in chondrocytes, but can also promote cancer cell proliferation. Required for normal development of the inner ear. Phosphorylates PLCG1, CBL and FRS2. Ligand binding leads to the activation of several signaling cascades. Activation of PLCG1 leads to the production of the cellular signaling molecules diacylglycerol and inositol 1,4,5-trisphosphate. Phosphorylation of FRS2 triggers recruitment of GRB2, GAB1, PIK3R1 and SOS1, and mediates activation of RAS, MAPK1/ERK2, MAPK3/ERK1 and the MAP kinase signaling pathway, as well as of the AKT1 signaling pathway. Plays a role in the regulation of vitamin D metabolism. Mutations that lead to constitutive kinase activation or impair normal FGFR3 maturation, internalization and degradation lead to aberrant signaling. Over-expressed or constitutively activated FGFR3 promotes activation of STAT1, STAT5A and STAT5B. Plays a role in postnatal lung development. The protein is Fibroblast growth factor receptor 3 (Fgfr3) of Mus musculus (Mouse).